The primary structure comprises 318 residues: MKSLNIIFAGTPDFAARHLQALLNSQHNVIGVYTQPDRPAGRGKKLTASPVKELAVANNIPVYQPGSLRKEPAQQALAALNADIMVVVAYGLILPKVVLDTPRLGCINVHGSILPRWRGAAPIQRALWAGDKETGVTVMQMDVGLDTGDMLLKTYLPIEDSDTSASLYEKLAEQGPVALLQALKGLANGTLAAEKQDEALANYAEKLSKEEARLDWNKSAKQLWQEVRAFNPWPVSYFEHQGNTIKVWQAHVSETISTAAPGTIISASKRGIEVATADGVLTLLSMQLPGKKPLNVADILNARGEWFSPNTRLANEAE.

Residue 112–115 participates in (6S)-5,6,7,8-tetrahydrofolate binding; the sequence is SILP.

Belongs to the Fmt family.

The enzyme catalyses L-methionyl-tRNA(fMet) + (6R)-10-formyltetrahydrofolate = N-formyl-L-methionyl-tRNA(fMet) + (6S)-5,6,7,8-tetrahydrofolate + H(+). In terms of biological role, attaches a formyl group to the free amino group of methionyl-tRNA(fMet). The formyl group appears to play a dual role in the initiator identity of N-formylmethionyl-tRNA by promoting its recognition by IF2 and preventing the misappropriation of this tRNA by the elongation apparatus. The protein is Methionyl-tRNA formyltransferase of Shewanella sp. (strain W3-18-1).